A 254-amino-acid chain; its full sequence is Mitochondrial inner membrane protease ATP23 homolog (254 aa).

The segment at 1–32 is disordered; sequence MAQSGAKAADLSREPPGEQKPSPSSRQNEEDL. His-133 serves as a coordination point for a divalent metal cation. Residue Glu-134 is part of the active site. A divalent metal cation is bound at residue His-137.

The protein belongs to the peptidase M76 family.

This is Mitochondrial inner membrane protease ATP23 homolog (atp23) from Danio rerio (Zebrafish).